The sequence spans 312 residues: Magnesium protoporphyrin IX methyltransferase, chloroplastic (312 aa).

The N-terminal 39 residues, Met1–Val39, are a transit peptide targeting the chloroplast.

This sequence belongs to the class I-like SAM-binding methyltransferase superfamily. Magnesium protoporphyrin O-methyltransferase family.

Its subcellular location is the plastid. It localises to the chloroplast membrane. The protein resides in the chloroplast thylakoid membrane. It catalyses the reaction Mg-protoporphyrin IX + S-adenosyl-L-methionine = Mg-protoporphyrin IX 13-monomethyl ester + S-adenosyl-L-homocysteine. It functions in the pathway porphyrin-containing compound metabolism; chlorophyll biosynthesis. Regulated by the folate status via an increased concentration of S-adenosyl-homocysteine (AdoHcy), a potent inhibitor of most AdoMet-dependent methyltransferases. In terms of biological role, converts Mg-protoporphyrin IX to Mg-protoporphyrin IX methylester using S-adenosyl-L-methionine as a cofactor. Involved in chloroplast-to-nucleus signaling by acting as a negative effector of nuclear photosynthetic gene expression. In Arabidopsis thaliana (Mouse-ear cress), this protein is Magnesium protoporphyrin IX methyltransferase, chloroplastic (CHLM).